The following is a 235-amino-acid chain: Zinc transporter ZIP9 (235 aa).

Asn2 carries an N-linked (GlcNAc...) asparagine glycan. A run of 4 helical transmembrane segments spans residues Ser11 to Thr31, Thr75 to Ala95, Leu104 to Phe124, and His138 to Ser158. A glycan (N-linked (GlcNAc...) asparagine) is linked at Asn169. Transmembrane regions (helical) follow at residues Gly172–Pro192 and Leu214–Gln234.

It belongs to the ZIP transporter (TC 2.A.5) family.

The protein localises to the golgi apparatus. Its subcellular location is the trans-Golgi network membrane. It localises to the cell membrane. It is found in the cytoplasm. The protein resides in the perinuclear region. The protein localises to the mitochondrion. Its subcellular location is the nucleus. The enzyme catalyses Zn(2+)(in) = Zn(2+)(out). In terms of biological role, transports zinc ions across cell and organelle membranes into the cytoplasm and regulates intracellular zinc homeostasis. Participates in the zinc ions efflux out of the secretory compartments. Regulates intracellular zinc level, resulting in the enhancement of AKT1 and MAPK3/MAPK1 (Erk1/2) phosphorylation in response to the BCR activation. Also functions as a membrane androgen receptor that mediates, through a G protein, the non-classical androgen signaling pathway, characterized by the activation of MAPK3/MAPK1 (Erk1/2) and transcription factors CREB1 or ATF1. This pathway contributes to CLDN1 and CLDN5 expression and tight junction formation between adjacent Sertoli cells. Mediates androgen-induced vascular endothelial cell proliferation through activation of an inhibitory G protein leading to the AKT1 and MAPK3/MAPK1 (Erk1/2) activation which in turn modulate inhibition (phosphorylation) of GSK3B and CCND1 transcription. Moreover, has dual functions as a membrane-bound androgen receptor and as an androgen-dependent zinc transporter both of which are mediated through an inhibitory G protein (Gi) that mediates both MAP kinase and zinc signaling leading to the androgen-dependent apoptotic process. The sequence is that of Zinc transporter ZIP9 from Macaca fascicularis (Crab-eating macaque).